The chain runs to 427 residues: Tuberculostearic acid methyltransferase UfaA1 (427 aa).

This sequence belongs to the CFA/CMAS family.

Its pathway is lipid metabolism; fatty acid biosynthesis. Inhibited by S-adenosyl-L-homocysteine. Its function is as follows. Involved in the biosynthesis of the tuberculostearic acid (10-methylstearic-acid or TSA), a constituent lipid of the mycobacterial cell wall. Catalyzes the transfer of the methyl group from S-adenosyl-L-methionine (SAM) to the double bond of oleic acid in phosphatidylethanolamine or phosphatidylcholine to produce TSA. The protein is Tuberculostearic acid methyltransferase UfaA1 of Mycobacterium tuberculosis (strain ATCC 25618 / H37Rv).